A 410-amino-acid polypeptide reads, in one-letter code: Argininosuccinate synthase (410 aa).

9-17 (AYSGGLDTS) provides a ligand contact to ATP. Tyr86 provides a ligand contact to L-citrulline. Residue Gly116 participates in ATP binding. Residues Thr118, Asn122, and Asp123 each contribute to the L-aspartate site. An L-citrulline-binding site is contributed by Asn122. 4 residues coordinate L-citrulline: Arg126, Ser174, Glu259, and Tyr271.

The protein belongs to the argininosuccinate synthase family. Type 1 subfamily. As to quaternary structure, homotetramer.

Its subcellular location is the cytoplasm. The enzyme catalyses L-citrulline + L-aspartate + ATP = 2-(N(omega)-L-arginino)succinate + AMP + diphosphate + H(+). It functions in the pathway amino-acid biosynthesis; L-arginine biosynthesis; L-arginine from L-ornithine and carbamoyl phosphate: step 2/3. In Limosilactobacillus reuteri (strain DSM 20016) (Lactobacillus reuteri), this protein is Argininosuccinate synthase.